The primary structure comprises 418 residues: UDP-N-acetylglucosamine 1-carboxyvinyltransferase (418 aa).

Lys22–Asn23 provides a ligand contact to phosphoenolpyruvate. Arg92 serves as a coordination point for UDP-N-acetyl-alpha-D-glucosamine. Catalysis depends on Cys116, which acts as the Proton donor. Position 116 is a 2-(S-cysteinyl)pyruvic acid O-phosphothioketal (Cys116). Residues Arg121–Leu125, Asp305, and Leu327 contribute to the UDP-N-acetyl-alpha-D-glucosamine site.

Belongs to the EPSP synthase family. MurA subfamily.

The protein resides in the cytoplasm. The enzyme catalyses phosphoenolpyruvate + UDP-N-acetyl-alpha-D-glucosamine = UDP-N-acetyl-3-O-(1-carboxyvinyl)-alpha-D-glucosamine + phosphate. It participates in cell wall biogenesis; peptidoglycan biosynthesis. Cell wall formation. Adds enolpyruvyl to UDP-N-acetylglucosamine. This chain is UDP-N-acetylglucosamine 1-carboxyvinyltransferase, found in Campylobacter jejuni subsp. doylei (strain ATCC BAA-1458 / RM4099 / 269.97).